A 54-amino-acid chain; its full sequence is Califin-C (54 aa).

A disulfide bond links Cys-25 and Cys-53. Leu-36 is modified (leucine amide).

The protein belongs to the molluscan ELH family. In terms of assembly, this protein consists of a large 36-residue subunit, bound by a single disulfide-bond to a small 18-residue subunit.

The protein resides in the secreted. Injected in sexually mature animals califin C excites LB and LC cells of the abdominal ganglion and cause egg-laying. This chain is Califin-C, found in Aplysia californica (California sea hare).